The chain runs to 214 residues: Soluble inorganic pyrophosphatase (214 aa).

Substrate contacts are provided by Lys-64, Arg-78, and Tyr-90. Residues Asp-100, Asp-105, and Asp-137 each coordinate Mg(2+). Position 174 (Tyr-174) interacts with substrate.

It belongs to the PPase family. Mg(2+) serves as cofactor.

The protein localises to the cytoplasm. It carries out the reaction diphosphate + H2O = 2 phosphate + H(+). In Oryza sativa subsp. indica (Rice), this protein is Soluble inorganic pyrophosphatase (IPP).